A 281-amino-acid polypeptide reads, in one-letter code: sn-glycerol-3-phosphate transport system permease protein UgpE (281 aa).

6 helical membrane-spanning segments follow: residues 14-34 (VMLI…FVAA), 85-105 (LAIT…IVYF), 113-133 (FFWM…FPTV), 142-162 (MDSY…TFLF), 188-210 (FFDM…TFIY), and 247-267 (WNQV…VVLL). Residues 77–268 (LLNSFVMALA…LPPLLVVLLM (192 aa)) enclose the ABC transmembrane type-1 domain.

Belongs to the binding-protein-dependent transport system permease family. UgpAE subfamily. As to quaternary structure, the complex is composed of two ATP-binding proteins (UgpC), two transmembrane proteins (UgpA and UgpE) and a solute-binding protein (UgpB).

Its subcellular location is the cell inner membrane. Functionally, part of the ABC transporter complex UgpBAEC involved in sn-glycerol-3-phosphate (G3P) import. Probably responsible for the translocation of the substrate across the membrane. The polypeptide is sn-glycerol-3-phosphate transport system permease protein UgpE (ugpE) (Pectobacterium atrosepticum (strain SCRI 1043 / ATCC BAA-672) (Erwinia carotovora subsp. atroseptica)).